The sequence spans 216 residues: Probable nicotinate-nucleotide adenylyltransferase (216 aa).

This sequence belongs to the NadD family.

The enzyme catalyses nicotinate beta-D-ribonucleotide + ATP + H(+) = deamido-NAD(+) + diphosphate. The protein operates within cofactor biosynthesis; NAD(+) biosynthesis; deamido-NAD(+) from nicotinate D-ribonucleotide: step 1/1. In terms of biological role, catalyzes the reversible adenylation of nicotinate mononucleotide (NaMN) to nicotinic acid adenine dinucleotide (NaAD). This Desulfatibacillum aliphaticivorans protein is Probable nicotinate-nucleotide adenylyltransferase.